Consider the following 147-residue polypeptide: Large ribosomal subunit protein uL13 (147 aa).

It belongs to the universal ribosomal protein uL13 family. In terms of assembly, part of the 50S ribosomal subunit.

Functionally, this protein is one of the early assembly proteins of the 50S ribosomal subunit, although it is not seen to bind rRNA by itself. It is important during the early stages of 50S assembly. The protein is Large ribosomal subunit protein uL13 of Renibacterium salmoninarum (strain ATCC 33209 / DSM 20767 / JCM 11484 / NBRC 15589 / NCIMB 2235).